The primary structure comprises 406 residues: Cholinephosphotransferase 1 (406 aa).

At alanine 2 the chain carries N-acetylalanine. Topologically, residues 2 to 62 (AAGAGAGSAP…LLQWIPLWMA (61 aa)) are cytoplasmic. The helical transmembrane segment at 63 to 83 (PNSITLLGLAVNVVTTLVLIS) threads the bilayer. Asparagine 64 serves as a coordination point for CDP-choline. The Lumenal segment spans residues 84–93 (YCPTATEEAP). Residues 94-118 (YWTYLLCALGLFIYQSLDAIDGKQA) form a helical membrane-spanning segment. Aspartate 111 and aspartate 114 together coordinate Mg(2+). Position 119 (arginine 119) interacts with CDP-choline. Residues 119–125 (RRTNSCS) are Cytoplasmic-facing. A helical transmembrane segment spans residues 126–150 (PLGELFDHGCDSLSTVFMAVGASIA). Aspartate 132 is a Mg(2+) binding site. The active-site Proton acceptor is histidine 133. Aspartate 136 provides a ligand contact to Mg(2+). The Lumenal segment spans residues 151–160 (ARLGTYPDWF). A helical transmembrane segment spans residues 161–179 (FFCSFIGMFVFYCAHWQTY). Residues 180–190 (VSGMLRFGKVD) are Cytoplasmic-facing. Residues 191–207 (VTEIQIALVIVFVLSAF) traverse the membrane as a helical segment. Residues 208–222 (GGATMWDYTIPILEI) are Lumenal-facing. The chain crosses the membrane as a helical span at residues 223–248 (KLKILPVLGFLGGVIFSCSNYFHVIL). Residues 249–265 (HGGVGKNGSTIAGTSVL) lie on the Cytoplasmic side of the membrane. The helical transmembrane segment at 266 to 281 (SPGLHIGLIIILAIMI) threads the bilayer. Over 282–293 (YKKSATDVFEKH) the chain is Lumenal. The chain crosses the membrane as a helical span at residues 294–316 (PCLYILMFGCVFAKVSQKLVVAH). Residues 317 to 329 (MTKSELYLQDTVF) are Cytoplasmic-facing. A helical transmembrane segment spans residues 330–339 (LGPGLLFLDQ). Topologically, residues 340–346 (YFNNFID) are lumenal. The chain crosses the membrane as a helical span at residues 347-376 (EYVVLWMAMVISSFDMVIYFSALCLQISRH). Over 377-406 (LHLNIFKTACHQAPEQVQVLSSKSHQNNMD) the chain is Cytoplasmic.

The protein belongs to the CDP-alcohol phosphatidyltransferase class-I family. Requires Mg(2+) as cofactor. It depends on Mn(2+) as a cofactor. Highly expressed in testis, colon, small intestine, heart, prostate and spleen. Also detected in kidney, skeletal muscle, pancreas, leukocytes, ovary and thymus. Weakly expressed in the brain, placenta and lung. Overexpressed in cancerous breast epithelial cell lines.

The protein resides in the golgi apparatus membrane. It carries out the reaction CDP-choline + a 1,2-diacyl-sn-glycerol = a 1,2-diacyl-sn-glycero-3-phosphocholine + CMP + H(+). The enzyme catalyses 1-octadecanoyl-2-(5Z,8Z,11Z,14Z-eicosatetraenoyl)-sn-glycerol + CDP-choline = 1-octadecanoyl-2-(5Z,8Z,11Z,14Z-eicosatetraenoyl)-sn-glycero-3-phosphocholine + CMP + H(+). The catalysed reaction is 1-hexadecanoyl-2-(9Z-octadecenoyl)-sn-glycerol + CDP-choline = 1-hexadecanoyl-2-(9Z-octadecenoyl)-sn-glycero-3-phosphocholine + CMP + H(+). It catalyses the reaction 1-hexadecanoyl-2-(4Z,7Z,10Z,13Z,16Z,19Z-docosahexaenoyl)-sn-glycerol + CDP-choline = 1-hexadecanoyl-2-(4Z,7Z,10Z,13Z,16Z,19Z-docosahexaenoyl)-sn-glycero-3-phosphocholine + CMP + H(+). It carries out the reaction 1,2-dioctanoyl-sn-glycerol + CDP-choline = 1,2-dioctanoyl-sn-glycero-3-phosphocholine + CMP + H(+). It participates in phospholipid metabolism; phosphatidylcholine biosynthesis; phosphatidylcholine from phosphocholine: step 2/2. Its function is as follows. Catalyzes the final step of de novo phosphatidylcholine (PC) synthesis, i.e. the transfer of choline phosphate from CDP-choline to the free hydroxyl of a diacylglycerol (DAG), producing a PC. It thereby plays a central role in the formation and maintenance of vesicular membranes. This chain is Cholinephosphotransferase 1, found in Homo sapiens (Human).